The chain runs to 199 residues: Holliday junction branch migration complex subunit RuvA (199 aa).

Residues Met1 to Leu64 are domain I. The domain II stretch occupies residues Asp65–Glu143. Residues Gln144–Leu148 form a flexible linker region. A domain III region spans residues Leu148 to Arg199.

The protein belongs to the RuvA family. In terms of assembly, homotetramer. Forms an RuvA(8)-RuvB(12)-Holliday junction (HJ) complex. HJ DNA is sandwiched between 2 RuvA tetramers; dsDNA enters through RuvA and exits via RuvB. An RuvB hexamer assembles on each DNA strand where it exits the tetramer. Each RuvB hexamer is contacted by two RuvA subunits (via domain III) on 2 adjacent RuvB subunits; this complex drives branch migration. In the full resolvosome a probable DNA-RuvA(4)-RuvB(12)-RuvC(2) complex forms which resolves the HJ.

The protein localises to the cytoplasm. Functionally, the RuvA-RuvB-RuvC complex processes Holliday junction (HJ) DNA during genetic recombination and DNA repair, while the RuvA-RuvB complex plays an important role in the rescue of blocked DNA replication forks via replication fork reversal (RFR). RuvA specifically binds to HJ cruciform DNA, conferring on it an open structure. The RuvB hexamer acts as an ATP-dependent pump, pulling dsDNA into and through the RuvAB complex. HJ branch migration allows RuvC to scan DNA until it finds its consensus sequence, where it cleaves and resolves the cruciform DNA. In Syntrophomonas wolfei subsp. wolfei (strain DSM 2245B / Goettingen), this protein is Holliday junction branch migration complex subunit RuvA.